The primary structure comprises 497 residues: Probable sensor kinase SilS (497 aa).

The Cytoplasmic portion of the chain corresponds to 1-15; the sequence is MHSKPSRLPFSLALR. A helical membrane pass occupies residues 16–36; that stretch reads LTFFISLSTILAFIAFTWFML. At 37–186 the chain is on the periplasmic side; sequence HSVEKHFAEQ…HLHYLDALKK (150 aa). Residues 187–207 form a helical membrane-spanning segment; sequence NLIAIAVVISLLIVLIIRIAV. Residues 208-261 form the HAMP domain; it reads RQGHLPLRNVSNAIKNITSENLDARLEPTRVPIELEQLVISFNHMIGKIEDVFT. Residues 208–497 are Cytoplasmic-facing; the sequence is RQGHLPLRNV…KMIPDTQCWE (290 aa). A Histidine kinase domain is found at 269-487; the sequence is DIAHEIRTPI…RFILSVPRLE (219 aa). At H272 the chain carries Phosphohistidine; by autocatalysis.

Its subcellular location is the cell inner membrane. The enzyme catalyses ATP + protein L-histidine = ADP + protein N-phospho-L-histidine.. Its function is as follows. Component of the sil cation-efflux system that confers resistance to silver. Probable member of a two-component regulatory system SilS/SilR. May activate SilR by phosphorylation. The sequence is that of Probable sensor kinase SilS (silS) from Salmonella typhimurium.